The sequence spans 1012 residues: Multiple C2 domain and transmembrane region protein 10 (1012 aa).

Positions 1-115 (MTEAKTGTGN…REGESVVQLY (115 aa)) constitute a C2 1 domain. The segment at 141–203 (ENGENVRRVN…SQQNGQGQRM (63 aa)) is disordered. A compositionally biased stretch (basic residues) spans 148–160 (RVNRSGGSKKSKK). Low complexity-rich tracts occupy residues 161–180 (VQNVSSSMAIQQQQQQQQQQ) and 188–202 (RGNQQQSQQNGQGQR). 3 consecutive C2 domains span residues 262 to 376 (SSHK…PQWY), 411 to 551 (KAGN…SRWF), and 585 to 710 (YNSD…THSY). Ca(2+) is bound by residues Glu296, Glu344, Asn346, and Glu349. 3 helical membrane-spanning segments follow: residues 810–830 (FFRLVNVISGLVAVAKLVEVM), 841–861 (VFVLAFLFMVLFPELLLPCLL), and 952–972 (ATFLFLMFCLLAAVGFYTVPV).

Belongs to the MCTP family. Ca(2+) is required as a cofactor. Highly expressed in roots meristems, shoot apical meristems (SAMs) and in incipient leaf primordia. Observed in flowers.

It localises to the endoplasmic reticulum membrane. Its function is as follows. May function as a signaling molecule by regulating the trafficking of other regulators. This chain is Multiple C2 domain and transmembrane region protein 10, found in Arabidopsis thaliana (Mouse-ear cress).